Here is a 249-residue protein sequence, read N- to C-terminus: Suppressor of silencing P0 (249 aa).

Positions Leu-63–Leu-67 constitute an F-box-like domain.

It belongs to the polerovirus P0 protein family. Interacts (via F-box-like domain) with host AGO1; this interaction targets AGO1 for degradation, and thereby suppresses the silencing function of the latter. Interacts (via F-box-like domain) with host ASK1 and ASK2 (SKP proteins); these interactions are essential for viral pathogenicity. Part of a SCF P0 complex composed of P0 and the host proteins SKP and CUL1.

In terms of biological role, suppressor of RNA-mediated gene silencing, also known as post-transcriptional gene silencing (PTGS), a mechanism of plant viral defense that limits the accumulation of viral RNAs. The P0 protein suppresses local PTGS using its F-box-like domain to mediate destabilization and degradation of the AGO1 protein. The chain is Suppressor of silencing P0 from Turnip yellows virus (isolate FL-1) (TuYV).